Here is a 127-residue protein sequence, read N- to C-terminus: Large ribosomal subunit protein bL20 (127 aa).

The protein belongs to the bacterial ribosomal protein bL20 family.

Binds directly to 23S ribosomal RNA and is necessary for the in vitro assembly process of the 50S ribosomal subunit. It is not involved in the protein synthesizing functions of that subunit. In Bifidobacterium animalis subsp. lactis (strain AD011), this protein is Large ribosomal subunit protein bL20.